The sequence spans 788 residues: Endonuclease MutS2 (788 aa).

335 to 342 (GPNTGGKT) serves as a coordination point for ATP. Positions 688-708 (VKSASKTKKRSGGTSITKQSA) are disordered. Residues 699–708 (GGTSITKQSA) show a composition bias toward polar residues. The 76-residue stretch at 713–788 (LDLRGVRVEE…GHGVTIIELK (76 aa)) folds into the Smr domain.

This sequence belongs to the DNA mismatch repair MutS family. MutS2 subfamily. In terms of assembly, homodimer. Binds to stalled ribosomes, contacting rRNA.

Endonuclease that is involved in the suppression of homologous recombination and thus may have a key role in the control of bacterial genetic diversity. In terms of biological role, acts as a ribosome collision sensor, splitting the ribosome into its 2 subunits. Detects stalled/collided 70S ribosomes which it binds and splits by an ATP-hydrolysis driven conformational change. Acts upstream of the ribosome quality control system (RQC), a ribosome-associated complex that mediates the extraction of incompletely synthesized nascent chains from stalled ribosomes and their subsequent degradation. Probably generates substrates for RQC. In Exiguobacterium sibiricum (strain DSM 17290 / CCUG 55495 / CIP 109462 / JCM 13490 / 255-15), this protein is Endonuclease MutS2.